The primary structure comprises 77 residues: MVKFTTFLCIIALLLCSTLTHASARLNPTSVYPEENSFKKLEQGEVICEGVGEEECFLIRRTLVAHTDYIYTQNHNP.

The first 24 residues, 1 to 24, serve as a signal peptide directing secretion; it reads MVKFTTFLCIIALLLCSTLTHASA. A propeptide spanning residues 25–68 is cleaved from the precursor; the sequence is RLNPTSVYPEENSFKKLEQGEVICEGVGEEECFLIRRTLVAHTD. Sulfotyrosine occurs at positions 69 and 71. A propeptide spanning residues 74-77 is cleaved from the precursor; that stretch reads NHNP.

It belongs to the phytosulfokine family. Post-translationally, sulfation is important for activity and for the binding to a putative membrane receptor. PSK-beta is an enzymatic derivative of PSK-alpha. As to expression, expressed in stems, roots, mature leaves and flowers. Most abundant in vascular bundles.

Its subcellular location is the secreted. In terms of biological role, promotes plant cell differentiation, organogenesis and somatic embryogenesis as well as cell proliferation. May be involved in the low quiescent center cell proliferation. In Arabidopsis thaliana (Mouse-ear cress), this protein is Phytosulfokines 5 (PSK5).